A 332-amino-acid polypeptide reads, in one-letter code: Probable isoaspartyl peptidase/L-asparaginase CG7860 (332 aa).

Catalysis depends on Thr-188, which acts as the Nucleophile. Substrate contacts are provided by residues Arg-216 to Asp-219 and Thr-239 to Gly-242.

Belongs to the Ntn-hydrolase family. In terms of assembly, heterodimer of an alpha and beta chain produced by autocleavage. In terms of processing, cleaved into an alpha and beta chain by autocatalysis; this activates the enzyme. The N-terminal residue of the beta subunit is responsible for the nucleophile hydrolase activity.

The catalysed reaction is L-asparagine + H2O = L-aspartate + NH4(+). The enzyme catalyses Cleavage of a beta-linked Asp residue from the N-terminus of a polypeptide.. Functionally, has both L-asparaginase and beta-aspartyl peptidase activity. Does not have aspartylglucosaminidase activity and is inactive toward GlcNAc-L-Asn. Likewise, has no activity toward glutamine. The protein is Probable isoaspartyl peptidase/L-asparaginase CG7860 of Drosophila melanogaster (Fruit fly).